The sequence spans 93 residues: Putative pterin-4-alpha-carbinolamine dehydratase (93 aa).

It belongs to the pterin-4-alpha-carbinolamine dehydratase family.

It carries out the reaction (4aS,6R)-4a-hydroxy-L-erythro-5,6,7,8-tetrahydrobiopterin = (6R)-L-erythro-6,7-dihydrobiopterin + H2O. This Sulfurisphaera tokodaii (strain DSM 16993 / JCM 10545 / NBRC 100140 / 7) (Sulfolobus tokodaii) protein is Putative pterin-4-alpha-carbinolamine dehydratase.